A 539-amino-acid polypeptide reads, in one-letter code: MDRIEIPVLVVGGGLTGLAAAVFLRQQGVDCLLVERHRSTTFLTRASGINARTMELLRNAGLEETVIDRSLHLIEGKRWRELGQPADRIPWVVLRARDLADIERAVIVEEPSLDVADVSPTRAQWCGQDKLEPILRDEAVRRGADIRFHTRLDSFAQDADGVDAVIVDRGTGARTAVRSRYLIAADGVRSTVRQALGVTGTGHGSLGKAMSVLFQADFEPVLHGRRFVITYMANPQAPGVLQTFDENRWIFGFFCDAYGGGDAAFDTGRCADIVRTSLGIPDIPLDVQLVQPWEMSHHVADSYRSGRVFLAGDAAHVHPPAGAFGANGGIQDAHNLAWKLASVLHGRASDALLDTYHQERHPVGTEIAEQAWTRHTYRLDGDDELGRRLVDTKVVAAGYRYTSSAVLGAAYPTAIPHELALTGLPGQRVPHVWLDHDGRRVSTVDLAVDGFVLLARADGTPWADAAARLAATTGIPLTAHVVGKTLTDPADALAAATGLGEAGALLLRPDGFVAWRSDTSADDPEAVLDGVLARILART.

Positions 15, 35, 128, and 152 each coordinate FAD. Tyr-231 functions as the Proton acceptor in the catalytic mechanism. Asp-313 is a binding site for FAD.

Belongs to the PheA/TfdB FAD monooxygenase family. The cofactor is FAD.

The catalysed reaction is tetracenomycin B2 + 2 NADPH + 2 O2 + 2 H(+) = 8-demethyltetracenomycin C + 2 NADP(+) + H2O. The enzyme catalyses tetracenomycin A2 + 2 NADPH + 2 O2 + 2 H(+) = tetracenomycin C + 2 NADP(+) + H2O. It functions in the pathway antibiotic biosynthesis. Functionally, involved in the biosynthesis of elloramycin, an antitumor polyketide. In vivo, probably catalyzes the triple hydroxylation of 8-demethyltetracenomycin A2 (tetracenomycin B2) at positions C-4, C-4a and C-12a to give 8-demethyltetracenomycin C (8-DMTC). In vitro, catalyzes the triple hydroxylation of tetracenomycin A2 (TCM A2) to give tetracenomycin C (TCM C). Uses NADPH as an electron donor and requires molecular O(2). The chain is Tetracenomycin B2 monooxygenase-dioxygenase from Streptomyces olivaceus.